A 331-amino-acid polypeptide reads, in one-letter code: Glucokinase (331 aa).

16 to 21 is an ATP binding site; that stretch reads GDIGGT.

It belongs to the bacterial glucokinase family.

The protein resides in the cytoplasm. It catalyses the reaction D-glucose + ATP = D-glucose 6-phosphate + ADP + H(+). The chain is Glucokinase from Pseudomonas aeruginosa (strain UCBPP-PA14).